An 87-amino-acid chain; its full sequence is Small ribosomal subunit protein bS20 (87 aa).

A disordered region spans residues 1–26 (MANTAQAKKRVRQNIKQRERNSGLRS).

It belongs to the bacterial ribosomal protein bS20 family.

Functionally, binds directly to 16S ribosomal RNA. The chain is Small ribosomal subunit protein bS20 from Nitrosomonas eutropha (strain DSM 101675 / C91 / Nm57).